We begin with the raw amino-acid sequence, 201 residues long: Translation initiation factor IF-3 (201 aa).

Belongs to the IF-3 family. As to quaternary structure, monomer.

The protein localises to the cytoplasm. In terms of biological role, IF-3 binds to the 30S ribosomal subunit and shifts the equilibrium between 70S ribosomes and their 50S and 30S subunits in favor of the free subunits, thus enhancing the availability of 30S subunits on which protein synthesis initiation begins. This is Translation initiation factor IF-3 from Prochlorococcus marinus (strain SARG / CCMP1375 / SS120).